We begin with the raw amino-acid sequence, 287 residues long: Glutamate racemase (287 aa).

Substrate-binding positions include Asp32–Ser33 and Tyr64–Gly65. The Proton donor/acceptor role is filled by Cys96. Asn97–Thr98 serves as a coordination point for substrate. The active-site Proton donor/acceptor is the Cys208. Thr209 to His210 is a binding site for substrate.

Belongs to the aspartate/glutamate racemases family.

The catalysed reaction is L-glutamate = D-glutamate. Its pathway is cell wall biogenesis; peptidoglycan biosynthesis. In terms of biological role, provides the (R)-glutamate required for cell wall biosynthesis. The polypeptide is Glutamate racemase (Serratia proteamaculans (strain 568)).